The sequence spans 99 residues: uncharacterized protein (99 aa).

The signal sequence occupies residues 1–19; that stretch reads MLGMIRWVVEGTLVAMLLS. The interval 71 to 99 is disordered; it reads DGFGRINDSGPKRRGRDQSQYSSRFVELD.

It localises to the cytoplasm. This is an uncharacterized protein from Saccharomyces cerevisiae (strain ATCC 204508 / S288c) (Baker's yeast).